Consider the following 185-residue polypeptide: Ribosome-recycling factor (185 aa).

A compositionally biased stretch (basic and acidic residues) spans 142–164 (IKKDGDAGEDDVTRAEKDLDKST). Residues 142-173 (IKKDGDAGEDDVTRAEKDLDKSTHQYTSQVDD) are disordered.

It belongs to the RRF family.

It is found in the cytoplasm. In terms of biological role, responsible for the release of ribosomes from messenger RNA at the termination of protein biosynthesis. May increase the efficiency of translation by recycling ribosomes from one round of translation to another. The chain is Ribosome-recycling factor from Mycolicibacterium gilvum (strain PYR-GCK) (Mycobacterium gilvum (strain PYR-GCK)).